The chain runs to 1340 residues: Thioester-containing protein 1 allele S1 (1340 aa).

An N-terminal signal peptide occupies residues 1-21 (MWQFIRSRILTVIIFIGAAHG). Residues Asn68, Asn199, Asn242, Asn312, and Asn481 are each glycosylated (N-linked (GlcNAc...) asparagine). Positions 580-609 (ENEFDIFHSLGLFARTLDDILFDSANEKTG) are may contain the cleavage site. Asn637, Asn728, Asn813, and Asn828 each carry an N-linked (GlcNAc...) asparagine glycan. A cross-link (isoglutamyl cysteine thioester (Cys-Gln)) is located at residues 859–862 (CGEQ). 3 disulfides stabilise this stretch: Cys1217–Cys1283, Cys1326–Cys1338, and Cys1329–Cys1334.

In terms of assembly, heterodimer of a TEP1-N chain and an TEP1-C chain non-covalently linked. Forms a complex composed of TEP1-N and TEP1-C heterodimer, LRIM1 and APL1C; the interaction stabilizes TEP1-N and TEP1-C heterodimer, prevents its binding to tissues while circulating in the hemolymph and protects the thioester bond from hydrolysis. Mature TEP1 and to a lesser extent full-length TEP1 interact with SPCLIP1; the interaction is induced by microbial infection. In terms of processing, in the hemolymph, the full-length protein is cleaved by an unknow protease into a 75kDa N-terminal (TEP1-N) chain and an 80kDa C-terminal (TEP1-C) chain which remain non-covalently linked. The TEP1-C chain contains the thioester bond which covalently binds to the pathogen surface. Cleavage is induced by bacterial infection or aseptic wound injury. During embryonic and pupal development, the cleaved form is the predominant form. Post-translationally, N-glycosylated. In terms of tissue distribution, specifically expressed in hemocytes (at protein level).

The protein resides in the secreted. Functionally, plays an essential role in the innate immune response to bacteria and protozoa infection. After proteolytic cleavage, the protein C-terminus binds covalently through a thioester bond to the pathogen surface resulting in pathogen clearance either by melanization or lysis. Initiate the recruitment and activation of a cascade of proteases, mostly of CLIP-domain serine proteases, which leads to the proteolytic cleavage of the prophenoloxidase (PPO) into active phenoloxidase (PO), the rate-limiting enzyme in melanin biosynthesis. In response to parasite P.berghei-mediated infection, binds to and mediates killing of ookinetes, as they egress from midgut epithelial cells into the basal labyrinth, by both lysis and melanization. During bacterial infection, binds to both Gram-positive and Gram-negative bacteria but only promotes phagocytosis of Gram-negative bacteria. Promotes the accumulation of SPCLIP1 onto the surface of P.berghei ookinetes and bacterium E.coli which leads to the melanization of the pathogen. Recruits CLIPA2 to bacteria surface. In response to bacterial infection, required for periostial hemocyte aggregation, but not for the aggregation of sessile hemocytes in non-periostial regions. During the late stage of fungus B.bassiana-mediated infection, required for the initiation of hyphae melanization by binding to the surface of hyphae and recruiting prophenoloxidase PPO to them. Plays a role in male fertility by binding to defective sperm cells and promoting their removal during spermatogenesis. Binds covalently through a thioester bond to the pathogen surface resulting in pathogen clearance. This chain is Thioester-containing protein 1 allele S1, found in Anopheles gambiae (African malaria mosquito).